A 318-amino-acid chain; its full sequence is L-lactate dehydrogenase (318 aa).

Residues V18, D39, K44, Y69, and 83–84 (GA) each bind NAD(+). Residues Q86 and R92 each coordinate substrate. NAD(+)-binding positions include S105, 122-124 (VSN), and S147. 124–127 (NPVD) lines the substrate pocket. 152–155 (DTSR) serves as a coordination point for substrate. Catalysis depends on H179, which acts as the Proton acceptor. A Phosphotyrosine modification is found at Y225. T234 contributes to the substrate binding site.

The protein belongs to the LDH/MDH superfamily. LDH family. In terms of assembly, homotetramer.

The protein resides in the cytoplasm. The catalysed reaction is (S)-lactate + NAD(+) = pyruvate + NADH + H(+). It participates in fermentation; pyruvate fermentation to lactate; (S)-lactate from pyruvate: step 1/1. Catalyzes the conversion of lactate to pyruvate. This Clostridium botulinum (strain 657 / Type Ba4) protein is L-lactate dehydrogenase.